Reading from the N-terminus, the 461-residue chain is Probable tubulin polyglutamylase TTLL9 (461 aa).

The disordered stretch occupies residues 1–21; that stretch reads MSRPKNQNYKGHGLQKGKERE. The 381-residue stretch at 22-402 folds into the TTL domain; the sequence is QRASIRFKTT…EARLTGREKR (381 aa). ATP is bound by residues lysine 149 and 155–156; that span reads QG. Residue glutamine 155 coordinates a protein. Residues 182–208 form a disordered region; the sequence is SLEAQPARNTVNPSGSHDTRSSDDQKD. Residues 188-197 show a composition bias toward polar residues; the sequence is ARNTVNPSGS. The span at 198–208 shows a compositional bias: basic and acidic residues; sequence HDTRSSDDQKD. ATP-binding positions include 218-221 and 231-233; these read QRYI and KFD. Position 257 (arginine 257) interacts with L-glutamate. 276-277 serves as a coordination point for ATP; the sequence is TN. L-glutamate is bound at residue lysine 294. Mg(2+) contacts are provided by aspartate 348, glutamate 361, and asparagine 363. Lysine 379 lines the L-glutamate pocket.

Belongs to the tubulin--tyrosine ligase family. Mg(2+) serves as cofactor.

The protein localises to the cytoplasm. The protein resides in the cytoskeleton. It is found in the cilium basal body. Its subcellular location is the flagellum axoneme. The enzyme catalyses (L-glutamyl)(n)-gamma-L-glutamyl-L-glutamyl-[protein] + L-glutamate + ATP = (L-glutamyl)(n+1)-gamma-L-glutamyl-L-glutamyl-[protein] + ADP + phosphate + H(+). Probable tubulin polyglutamylase that generates side chains of glutamate on the gamma-carboxyl group of specific glutamate residues within the C-terminal tail of target proteins. Similar to TTLL1, may acquire enzymatic activity only in complex with other proteins as it is most likely lacking domains important for autonomous activity. Mediates tubulin polyglutamylation which induces establishment of microtubule heterogeneity in sperm flagella, thereby playing a role in normal motile flagella axoneme structure and sperm flagella beating pattern. The sequence is that of Probable tubulin polyglutamylase TTLL9 (TTLL9) from Bos taurus (Bovine).